Reading from the N-terminus, the 423-residue chain is D-tagatose-1,6-bisphosphate aldolase subunit GatZ (423 aa).

Belongs to the GatZ/KbaZ family. GatZ subfamily. In terms of assembly, forms a complex with GatY.

It participates in carbohydrate metabolism; D-tagatose 6-phosphate degradation; D-glyceraldehyde 3-phosphate and glycerone phosphate from D-tagatose 6-phosphate: step 2/2. Functionally, component of the tagatose-1,6-bisphosphate aldolase GatYZ that is required for full activity and stability of the Y subunit. Could have a chaperone-like function for the proper and stable folding of GatY. When expressed alone, GatZ does not show any aldolase activity. Is involved in the catabolism of galactitol. This chain is D-tagatose-1,6-bisphosphate aldolase subunit GatZ, found in Salmonella newport (strain SL254).